A 313-amino-acid chain; its full sequence is Ribosomal RNA small subunit methyltransferase H (313 aa).

Residues 35–37 (GGH), D55, F81, D103, and Q110 each bind S-adenosyl-L-methionine.

It belongs to the methyltransferase superfamily. RsmH family.

Its subcellular location is the cytoplasm. The enzyme catalyses cytidine(1402) in 16S rRNA + S-adenosyl-L-methionine = N(4)-methylcytidine(1402) in 16S rRNA + S-adenosyl-L-homocysteine + H(+). Specifically methylates the N4 position of cytidine in position 1402 (C1402) of 16S rRNA. In Pseudomonas syringae pv. tomato (strain ATCC BAA-871 / DC3000), this protein is Ribosomal RNA small subunit methyltransferase H.